The sequence spans 359 residues: Peptide chain release factor 1 (359 aa).

An N5-methylglutamine modification is found at Gln-236.

This sequence belongs to the prokaryotic/mitochondrial release factor family. In terms of processing, methylated by PrmC. Methylation increases the termination efficiency of RF1.

The protein localises to the cytoplasm. In terms of biological role, peptide chain release factor 1 directs the termination of translation in response to the peptide chain termination codons UAG and UAA. The sequence is that of Peptide chain release factor 1 from Ureaplasma parvum serovar 3 (strain ATCC 27815 / 27 / NCTC 11736).